Consider the following 91-residue polypeptide: Small ribosomal subunit protein bS16 (91 aa).

Belongs to the bacterial ribosomal protein bS16 family.

This Ruthia magnifica subsp. Calyptogena magnifica protein is Small ribosomal subunit protein bS16.